The sequence spans 333 residues: Mitochondrial fission regulator 1 (333 aa).

Position 119 is a phosphoserine (Ser-119). The segment covering 286–307 has biased composition (basic and acidic residues); it reads YRSDSQDEVEKGVPKSESEATS. A disordered region spans residues 286-315; that stretch reads YRSDSQDEVEKGVPKSESEATSERVLFGPH.

The protein belongs to the MTFR1 family.

Its subcellular location is the mitochondrion. May play a role in mitochondrial aerobic respiration. May also regulate mitochondrial organization and fission. This Pongo abelii (Sumatran orangutan) protein is Mitochondrial fission regulator 1 (MTFR1).